The chain runs to 369 residues: Cobalt-precorrin-5B C(1)-methyltransferase (369 aa).

It belongs to the CbiD family.

The enzyme catalyses Co-precorrin-5B + S-adenosyl-L-methionine = Co-precorrin-6A + S-adenosyl-L-homocysteine. It participates in cofactor biosynthesis; adenosylcobalamin biosynthesis; cob(II)yrinate a,c-diamide from sirohydrochlorin (anaerobic route): step 6/10. Functionally, catalyzes the methylation of C-1 in cobalt-precorrin-5B to form cobalt-precorrin-6A. In Methanococcus vannielii (strain ATCC 35089 / DSM 1224 / JCM 13029 / OCM 148 / SB), this protein is Cobalt-precorrin-5B C(1)-methyltransferase.